A 326-amino-acid chain; its full sequence is uncharacterized protein (326 aa).

A run of 2 helical transmembrane segments spans residues 9–29 and 33–53; these read WVVLPLLRYPLLVALVLRWSL and ISICLTIYTLLINAFLIANSY. Asp-120, Asn-148, Tyr-214, Lys-218, and Thr-252 together coordinate NADP(+). The active-site Proton acceptor is the Tyr-214. Catalysis depends on Lys-218, which acts as the Lowers pKa of active site Tyr.

The protein belongs to the short-chain dehydrogenases/reductases (SDR) family.

The protein localises to the mitochondrion membrane. In terms of biological role, involved in the resistance to DNA-damaging agents. This is an uncharacterized protein from Saccharomyces cerevisiae (strain ATCC 204508 / S288c) (Baker's yeast).